Here is a 660-residue protein sequence, read N- to C-terminus: tRNA 5-methylaminomethyl-2-thiouridine biosynthesis bifunctional protein MnmC (660 aa).

The interval M1–I235 is tRNA (mnm(5)s(2)U34)-methyltransferase. The tract at residues I266 to K660 is FAD-dependent cmnm(5)s(2)U34 oxidoreductase.

This sequence in the N-terminal section; belongs to the methyltransferase superfamily. tRNA (mnm(5)s(2)U34)-methyltransferase family. It in the C-terminal section; belongs to the DAO family. FAD serves as cofactor.

The protein localises to the cytoplasm. The catalysed reaction is 5-aminomethyl-2-thiouridine(34) in tRNA + S-adenosyl-L-methionine = 5-methylaminomethyl-2-thiouridine(34) in tRNA + S-adenosyl-L-homocysteine + H(+). In terms of biological role, catalyzes the last two steps in the biosynthesis of 5-methylaminomethyl-2-thiouridine (mnm(5)s(2)U) at the wobble position (U34) in tRNA. Catalyzes the FAD-dependent demodification of cmnm(5)s(2)U34 to nm(5)s(2)U34, followed by the transfer of a methyl group from S-adenosyl-L-methionine to nm(5)s(2)U34, to form mnm(5)s(2)U34. The chain is tRNA 5-methylaminomethyl-2-thiouridine biosynthesis bifunctional protein MnmC from Pseudomonas syringae pv. tomato (strain ATCC BAA-871 / DC3000).